The chain runs to 946 residues: DNA ligase 4 (946 aa).

ATP-binding residues include E295, K297, R302, E355, F397, E457, K462, K479, and K481. Catalysis depends on K297, which acts as the N6-AMP-lysine intermediate. E355 is a Mg(2+) binding site. E457 serves as a coordination point for Mg(2+). 2 consecutive BRCT domains span residues 688–787 (HRSD…PSHC) and 845–945 (VPHF…NYRL).

The protein belongs to the ATP-dependent DNA ligase family. It depends on Mg(2+) as a cofactor.

It is found in the nucleus. The enzyme catalyses ATP + (deoxyribonucleotide)n-3'-hydroxyl + 5'-phospho-(deoxyribonucleotide)m = (deoxyribonucleotide)n+m + AMP + diphosphate.. Its function is as follows. DNA ligase involved in DNA non-homologous end joining (NHEJ); required for double-strand break (DSB) repair. The polypeptide is DNA ligase 4 (LIG4) (Candida glabrata (strain ATCC 2001 / BCRC 20586 / JCM 3761 / NBRC 0622 / NRRL Y-65 / CBS 138) (Yeast)).